The primary structure comprises 360 residues: DNA replication and repair protein RecF (360 aa).

ATP is bound at residue 30 to 37; the sequence is GANGSGKT.

It belongs to the RecF family.

It is found in the cytoplasm. In terms of biological role, the RecF protein is involved in DNA metabolism; it is required for DNA replication and normal SOS inducibility. RecF binds preferentially to single-stranded, linear DNA. It also seems to bind ATP. The sequence is that of DNA replication and repair protein RecF from Acinetobacter baumannii (strain ATCC 17978 / DSM 105126 / CIP 53.77 / LMG 1025 / NCDC KC755 / 5377).